The following is a 131-amino-acid chain: uncharacterized protein (131 aa).

2 helical membrane-spanning segments follow: residues Val-5–Val-25 and Met-34–Asn-54. Residues Ala-62–Phe-131 form a disordered region. Composition is skewed to basic residues over residues Lys-66–His-92 and Lys-122–Phe-131.

It localises to the cell membrane. This is an uncharacterized protein from Bacillus subtilis (strain 168).